A 162-amino-acid chain; its full sequence is RNA replication protein (162 aa).

It belongs to the potexvirus/carlavirus RNA replication protein family.

It carries out the reaction RNA(n) + a ribonucleoside 5'-triphosphate = RNA(n+1) + diphosphate. The enzyme catalyses ATP + H2O = ADP + phosphate + H(+). RNA replication. The central part of this protein possibly functions as an ATP-binding helicase. This Lilium formosanum protein is RNA replication protein.